A 984-amino-acid chain; its full sequence is Glutamate [NMDA] receptor subunit 1 (984 aa).

Positions 1-24 (MAAAFAYRWLLCAAGIVNVLPIGA) are cleaved as a signal peptide. At 25-570 (QRHTASDNPS…TLVSFLQPFS (546 aa)) the chain is on the extracellular side. Residues Asn255, Asn311, Asn342, Asn394, Asn451, Asn478, and Asn498 are each glycosylated (N-linked (GlcNAc...) asparagine). Residues 527-529 (PLT) and Arg534 each bind glycine. The helical transmembrane segment at 571 to 591 (NTLWILVMVSVHVVALVLYLL) threads the bilayer. At 592 to 648 (DRFSPFGRFKLSHSDSNEEKALNLSSAVWFAWGVLLNSGIGEGTPRSFSARVLGMVW) the chain is on the cytoplasmic side. A helical membrane pass occupies residues 649-669 (AGFAMIIVASYTANLAAFLVL). Over 670 to 828 (ERPKTKLSGI…KTPNTLGLKN (159 aa)) the chain is Extracellular. N-linked (GlcNAc...) asparagine glycosylation is present at Asn690. Residues Ser700 and Asp744 each coordinate glycine. Residues 829–849 (MAGVFILVGVGIAGGVGLIII) form a helical membrane-spanning segment. Residues 850-984 (EVIYKKHQVK…YTSDVSHLVV (135 aa)) lie on the Cytoplasmic side of the membrane. The segment at 947 to 984 (KSGLVPPALGLGKTRPQQNPLPPRYSPGYTSDVSHLVV) is disordered. The segment covering 974–984 (GYTSDVSHLVV) has biased composition (polar residues).

It belongs to the glutamate-gated ion channel (TC 1.A.10.1) family. Forms a heteromeric NMDA channel with Nmdar2.

The protein localises to the cell membrane. It is found in the postsynaptic cell membrane. Its subcellular location is the postsynaptic density. Its function is as follows. NMDA receptor subtype of glutamate-gated ion channels with high calcium permeability and voltage-dependent sensitivity to magnesium. Mediated by glycine. This protein plays a key role in synaptic plasticity, synaptogenesis, excitotoxicity, memory acquisition and learning. It mediates neuronal functions in glutamate neurotransmission. Is involved in the cell surface targeting of NMDA receptors. Plays a role in associative learning and in long-term memory consolidation. This Drosophila virilis (Fruit fly) protein is Glutamate [NMDA] receptor subunit 1.